Here is a 569-residue protein sequence, read N- to C-terminus: Urease subunit alpha (569 aa).

The Urease domain occupies 131–569 (GSIDTHIHFI…VPMAQRYFLL (439 aa)). Ni(2+) contacts are provided by His-136, His-138, and Lys-219. Lys-219 is subject to N6-carboxylysine. His-221 contributes to the substrate binding site. Ni(2+) contacts are provided by His-248 and His-274. Catalysis depends on His-322, which acts as the Proton donor. Residue Asp-362 coordinates Ni(2+).

This sequence belongs to the metallo-dependent hydrolases superfamily. Urease alpha subunit family. In terms of assembly, heterotrimer of UreA (gamma), UreB (beta) and UreC (alpha) subunits. Three heterotrimers associate to form the active enzyme. It depends on Ni cation as a cofactor. Carboxylation allows a single lysine to coordinate two nickel ions.

The protein localises to the cytoplasm. The catalysed reaction is urea + 2 H2O + H(+) = hydrogencarbonate + 2 NH4(+). It functions in the pathway nitrogen metabolism; urea degradation; CO(2) and NH(3) from urea (urease route): step 1/1. The polypeptide is Urease subunit alpha (Prochlorococcus marinus (strain MIT 9301)).